Reading from the N-terminus, the 198-residue chain is Nascent polypeptide-associated complex subunit alpha (198 aa).

The NAC-A/B domain maps to 48 to 113 (ITRVVLKRTR…QAAAETGSVS (66 aa)). The region spanning 159–198 (LEDSDIKLVMEQANVSRNKAINGLKKNDSDVVNTIMDLCK) is the UBA domain.

Belongs to the NAC-alpha family. As to quaternary structure, part of the nascent polypeptide-associated complex (NAC), consisting of EGD2 and EGD1. NAC associates with ribosomes via EGD1.

The protein resides in the cytoplasm. The protein localises to the nucleus. Its function is as follows. Component of the nascent polypeptide-associated complex (NAC), a dynamic component of the ribosomal exit tunnel, protecting the emerging polypeptides from interaction with other cytoplasmic proteins to ensure appropriate nascent protein targeting. The NAC complex also promotes mitochondrial protein import by enhancing productive ribosome interactions with the outer mitochondrial membrane and blocks the inappropriate interaction of ribosomes translating non-secretory nascent polypeptides with translocation sites in the membrane of the endoplasmic reticulum. EGD2 may also be involved in transcription regulation. The polypeptide is Nascent polypeptide-associated complex subunit alpha (EGD2) (Yarrowia lipolytica (strain CLIB 122 / E 150) (Yeast)).